The primary structure comprises 1205 residues: Nitric oxide synthase 3 (1205 aa).

A disordered region spans residues 1-73 (MGNLKSVGQE…PPDGPKFPRV (73 aa)). Glycine 2 carries the N-myristoyl glycine lipid modification. Residues cysteine 15 and cysteine 26 are each lipidated (S-palmitoyl cysteine). The span at 15–27 (CGLGLGLGLGLCG) shows a compositional bias: gly residues. Residues 44 to 54 (LAPPPSPPPAP) are compositionally biased toward pro residues. Zn(2+)-binding residues include cysteine 96 and cysteine 101. Residues 100 to 488 (RCLGSLVFPR…TDPWKGSASK (389 aa)) form an interaction with NOSIP region. (6R)-L-erythro-5,6,7,8-tetrahydrobiopterin is bound at residue serine 104. Serine 116 is modified (phosphoserine; by CDK5). Cysteine 186 is a heme b binding site. Glutamine 249, tryptophan 358, tyrosine 359, glutamate 363, and asparagine 368 together coordinate L-arginine. 3 residues coordinate (6R)-L-erythro-5,6,7,8-tetrahydrobiopterin: alanine 448, tryptophan 449, and phenylalanine 462. Tyrosine 477 provides a ligand contact to heme b. Residues 492–512 (VTRKKTFKEVANAVKISASLM) are calmodulin-binding. Position 497 is a phosphothreonine; by AMPK (threonine 497). The Flavodoxin-like domain occupies 522 to 705 (ATILYGSETG…AFGGWAQAAF (184 aa)). FMN-binding residues include serine 528, glutamate 529, threonine 530, arginine 532, serine 574, and threonine 575. Residues serine 617, serine 635, and serine 640 each carry the phosphoserine modification. The FMN site is built by serine 656, cysteine 663, glutamate 689, and glutamine 693. Positions 758-1004 (RKMVQATVLA…IRGAPSFRLP (247 aa)) constitute an FAD-binding FR-type domain. Arginine 778 is a binding site for NADP(+). Histidine 800 contributes to the FAD binding site. Residues 819–850 (VEDPPPPGEPVAVEQLEKGSPGGPPPSWVRDP) are disordered. Position 838 is a phosphoserine (serine 838). 9 residues coordinate FAD: arginine 940, tyrosine 942, serine 943, threonine 958, alanine 960, tyrosine 964, valine 977, cysteine 978, and serine 979. Positions 1018, 1051, 1080, 1081, 1087, 1089, and 1091 each coordinate NADP(+). The residue at position 1177 (threonine 1177) is a Phosphothreonine. Residue serine 1179 is modified to Phosphoserine; by AMPK. Serine 1181 carries the post-translational modification Phosphoserine.

Belongs to the NOS family. As to quaternary structure, homodimer. Interacts with NOSIP and NOSTRIN. Interacts with HSP90AB1. Forms a complex with ASL, ASS1 and SLC7A1; the complex regulates cell-autonomous L-arginine synthesis and citrulline recycling while channeling extracellular L-arginine to nitric oxide synthesis pathway. The cofactor is heme b. FAD is required as a cofactor. It depends on FMN as a cofactor. (6R)-L-erythro-5,6,7,8-tetrahydrobiopterin serves as cofactor. Phosphorylation by AMPK at Ser-1179 in the presence of Ca(2+)-calmodulin (CaM) activates activity. In absence of Ca(2+)-calmodulin, AMPK also phosphorylates Thr-497, resulting in inhibition of activity. Phosphorylation of Ser-116 by CDK5 reduces activity.

It is found in the membrane. Its subcellular location is the caveola. It localises to the cytoplasm. The protein localises to the cytoskeleton. The protein resides in the golgi apparatus. It is found in the cell membrane. The catalysed reaction is 2 L-arginine + 3 NADPH + 4 O2 + H(+) = 2 L-citrulline + 2 nitric oxide + 3 NADP(+) + 4 H2O. Stimulated by calcium/calmodulin. Inhibited by NOSIP and NOSTRIN. In terms of biological role, produces nitric oxide (NO) which is implicated in vascular smooth muscle relaxation through a cGMP-mediated signal transduction pathway. NO mediates vascular endothelial growth factor (VEGF)-induced angiogenesis in coronary vessels and promotes blood clotting through the activation of platelets. The polypeptide is Nitric oxide synthase 3 (NOS3) (Canis lupus familiaris (Dog)).